Reading from the N-terminus, the 143-residue chain is Large ribosomal subunit protein uL13 (143 aa).

It belongs to the universal ribosomal protein uL13 family. Part of the 50S ribosomal subunit.

This protein is one of the early assembly proteins of the 50S ribosomal subunit, although it is not seen to bind rRNA by itself. It is important during the early stages of 50S assembly. The sequence is that of Large ribosomal subunit protein uL13 from Prochlorococcus marinus subsp. pastoris (strain CCMP1986 / NIES-2087 / MED4).